Consider the following 347-residue polypeptide: Ketol-acid reductoisomerase (NADP(+)) (347 aa).

Residues 3–182 (TKMFYDKDID…GSGRAGILET (180 aa)) enclose the KARI N-terminal Rossmann domain. NADP(+) contacts are provided by residues 26–29 (YGAQ), Arg-49, Ser-53, and 83–86 (DELQ). Residue His-108 is part of the active site. Residue Gly-134 coordinates NADP(+). A KARI C-terminal knotted domain is found at 183 to 328 (TFEEETTEDL…KKVRAMMPWI (146 aa)). Asp-191, Glu-195, Glu-227, and Glu-231 together coordinate Mg(2+). Ser-252 is a binding site for substrate.

The protein belongs to the ketol-acid reductoisomerase family. It depends on Mg(2+) as a cofactor.

It carries out the reaction (2R)-2,3-dihydroxy-3-methylbutanoate + NADP(+) = (2S)-2-acetolactate + NADPH + H(+). It catalyses the reaction (2R,3R)-2,3-dihydroxy-3-methylpentanoate + NADP(+) = (S)-2-ethyl-2-hydroxy-3-oxobutanoate + NADPH + H(+). Its pathway is amino-acid biosynthesis; L-isoleucine biosynthesis; L-isoleucine from 2-oxobutanoate: step 2/4. It functions in the pathway amino-acid biosynthesis; L-valine biosynthesis; L-valine from pyruvate: step 2/4. Involved in the biosynthesis of branched-chain amino acids (BCAA). Catalyzes an alkyl-migration followed by a ketol-acid reduction of (S)-2-acetolactate (S2AL) to yield (R)-2,3-dihydroxy-isovalerate. In the isomerase reaction, S2AL is rearranged via a Mg-dependent methyl migration to produce 3-hydroxy-3-methyl-2-ketobutyrate (HMKB). In the reductase reaction, this 2-ketoacid undergoes a metal-dependent reduction by NADPH to yield (R)-2,3-dihydroxy-isovalerate. The chain is Ketol-acid reductoisomerase (NADP(+)) from Leuconostoc mesenteroides subsp. mesenteroides (strain ATCC 8293 / DSM 20343 / BCRC 11652 / CCM 1803 / JCM 6124 / NCDO 523 / NBRC 100496 / NCIMB 8023 / NCTC 12954 / NRRL B-1118 / 37Y).